A 184-amino-acid chain; its full sequence is Protein GrpE (184 aa).

The segment at 1–24 (MADEQLDEKNLNSEEAGAVNGDAR) is disordered.

This sequence belongs to the GrpE family. Homodimer.

It localises to the cytoplasm. Its function is as follows. Participates actively in the response to hyperosmotic and heat shock by preventing the aggregation of stress-denatured proteins, in association with DnaK and GrpE. It is the nucleotide exchange factor for DnaK and may function as a thermosensor. Unfolded proteins bind initially to DnaJ; upon interaction with the DnaJ-bound protein, DnaK hydrolyzes its bound ATP, resulting in the formation of a stable complex. GrpE releases ADP from DnaK; ATP binding to DnaK triggers the release of the substrate protein, thus completing the reaction cycle. Several rounds of ATP-dependent interactions between DnaJ, DnaK and GrpE are required for fully efficient folding. In Pseudomonas entomophila (strain L48), this protein is Protein GrpE.